Here is a 426-residue protein sequence, read N- to C-terminus: Tyrosine--tRNA ligase (426 aa).

Y38 contributes to the L-tyrosine binding site. A 'HIGH' region motif is present at residues 43–52; sequence PTADSLHIGS. L-tyrosine-binding residues include Y176 and Q180. The 'KMSKS' region motif lies at 236 to 240; sequence KFGKT. Residue K239 coordinates ATP. Positions 359 to 426 constitute an S4 RNA-binding domain; it reads QTIVEVLTQS…KKLFNLYIWK (68 aa).

This sequence belongs to the class-I aminoacyl-tRNA synthetase family. TyrS type 1 subfamily. Homodimer.

It is found in the cytoplasm. The enzyme catalyses tRNA(Tyr) + L-tyrosine + ATP = L-tyrosyl-tRNA(Tyr) + AMP + diphosphate + H(+). In terms of biological role, catalyzes the attachment of tyrosine to tRNA(Tyr) in a two-step reaction: tyrosine is first activated by ATP to form Tyr-AMP and then transferred to the acceptor end of tRNA(Tyr). In Aliivibrio salmonicida (strain LFI1238) (Vibrio salmonicida (strain LFI1238)), this protein is Tyrosine--tRNA ligase.